Reading from the N-terminus, the 347-residue chain is S-adenosylmethionine:tRNA ribosyltransferase-isomerase (347 aa).

It belongs to the QueA family. As to quaternary structure, monomer.

The protein localises to the cytoplasm. It catalyses the reaction 7-aminomethyl-7-carbaguanosine(34) in tRNA + S-adenosyl-L-methionine = epoxyqueuosine(34) in tRNA + adenine + L-methionine + 2 H(+). It functions in the pathway tRNA modification; tRNA-queuosine biosynthesis. Functionally, transfers and isomerizes the ribose moiety from AdoMet to the 7-aminomethyl group of 7-deazaguanine (preQ1-tRNA) to give epoxyqueuosine (oQ-tRNA). The protein is S-adenosylmethionine:tRNA ribosyltransferase-isomerase of Pseudomonas paraeruginosa (strain DSM 24068 / PA7) (Pseudomonas aeruginosa (strain PA7)).